The following is a 287-amino-acid chain: PsbP domain-containing protein 1, chloroplastic (287 aa).

The protein belongs to the PsbP family. In terms of assembly, partially associated with photosystem I (PSI) complex, but is not a subunit of the complex. Interacts with PsaA and PsaB, but not with PasF.

It localises to the plastid. The protein resides in the chloroplast thylakoid lumen. Its function is as follows. Photosystem I assembly factor that assists the proper folding and integration of PsaB and PsaA into the thylakoid membrane. This Arabidopsis thaliana (Mouse-ear cress) protein is PsbP domain-containing protein 1, chloroplastic (PPD1).